We begin with the raw amino-acid sequence, 220 residues long: MERNTCMILALDVTEREEALKIAENVREFVDAIKVGYPLILATGLDIIRELARFAPVIADFKVADIPNTNRLICEQVFKAGADAVIVQGFTGRDSLDACIEVASKYGKDVFVVSEMSHPGGAEFLQSAAEAIAKMAVEAGAFGLVAPATRPERVKEIRKIIGDRLTIISPGVGAQGGKASDVISAGADWVIVGRSIYKAESPKEAACEIAEEIQAELRGK.

Substrate is bound by residues Asp12, Lys34, 60–69, Ser117, 170–180, Gly193, and Arg194; these read DFKVADIPNT and PGVGAQGGKAS. Catalysis depends on Lys62, which acts as the Proton donor.

It belongs to the OMP decarboxylase family. Type 1 subfamily. In terms of assembly, homodimer.

The enzyme catalyses orotidine 5'-phosphate + H(+) = UMP + CO2. It participates in pyrimidine metabolism; UMP biosynthesis via de novo pathway; UMP from orotate: step 2/2. Catalyzes the decarboxylation of orotidine 5'-monophosphate (OMP) to uridine 5'-monophosphate (UMP). In Methanosarcina mazei (strain ATCC BAA-159 / DSM 3647 / Goe1 / Go1 / JCM 11833 / OCM 88) (Methanosarcina frisia), this protein is Orotidine 5'-phosphate decarboxylase.